Reading from the N-terminus, the 105-residue chain is UPF0145 protein (105 aa).

Belongs to the UPF0145 family.

The chain is UPF0145 protein from Enterococcus faecalis (Streptococcus faecalis).